A 120-amino-acid polypeptide reads, in one-letter code: uncharacterized protein (120 aa).

One can recognise an HIT domain in the interval 7–120 (VFAKIITKNL…KLIGLINNND (114 aa)). The Histidine triad motif motif lies at 101–105 (HFHFH).

This is an uncharacterized protein from Rickettsia prowazekii (strain Madrid E).